The following is a 240-amino-acid chain: Ribonuclease 3 (240 aa).

The region spanning 10-136 (VREFQETVGV…LIGAVYLDRG (127 aa)) is the RNase III domain. Glutamate 49 contributes to the Mg(2+) binding site. Residue aspartate 53 is part of the active site. Positions 122 and 125 each coordinate Mg(2+). Residue glutamate 125 is part of the active site. The 69-residue stretch at 163 to 231 (DWKTSLQELT…AESAWKAIRA (69 aa)) folds into the DRBM domain. Residues 205–240 (TYGSGEGRSKKEAEQQAAESAWKAIRAATEKAKQES) are disordered. Over residues 219–228 (QQAAESAWKA) the composition is skewed to low complexity.

The protein belongs to the ribonuclease III family. Homodimer. It depends on Mg(2+) as a cofactor.

It localises to the cytoplasm. The enzyme catalyses Endonucleolytic cleavage to 5'-phosphomonoester.. In terms of biological role, digests double-stranded RNA. Involved in the processing of primary rRNA transcript to yield the immediate precursors to the large and small rRNAs (23S and 16S). Processes some mRNAs, and tRNAs when they are encoded in the rRNA operon. Processes pre-crRNA and tracrRNA of type II CRISPR loci if present in the organism. The protein is Ribonuclease 3 of Thermobifida fusca (strain YX).